The chain runs to 173 residues: Crossover junction endodeoxyribonuclease RuvC (173 aa).

Residues aspartate 8, glutamate 67, and aspartate 139 contribute to the active site. Mg(2+) is bound by residues aspartate 8, glutamate 67, and aspartate 139.

This sequence belongs to the RuvC family. As to quaternary structure, homodimer which binds Holliday junction (HJ) DNA. The HJ becomes 2-fold symmetrical on binding to RuvC with unstacked arms; it has a different conformation from HJ DNA in complex with RuvA. In the full resolvosome a probable DNA-RuvA(4)-RuvB(12)-RuvC(2) complex forms which resolves the HJ. Mg(2+) serves as cofactor.

The protein localises to the cytoplasm. The enzyme catalyses Endonucleolytic cleavage at a junction such as a reciprocal single-stranded crossover between two homologous DNA duplexes (Holliday junction).. In terms of biological role, the RuvA-RuvB-RuvC complex processes Holliday junction (HJ) DNA during genetic recombination and DNA repair. Endonuclease that resolves HJ intermediates. Cleaves cruciform DNA by making single-stranded nicks across the HJ at symmetrical positions within the homologous arms, yielding a 5'-phosphate and a 3'-hydroxyl group; requires a central core of homology in the junction. The consensus cleavage sequence is 5'-(A/T)TT(C/G)-3'. Cleavage occurs on the 3'-side of the TT dinucleotide at the point of strand exchange. HJ branch migration catalyzed by RuvA-RuvB allows RuvC to scan DNA until it finds its consensus sequence, where it cleaves and resolves the cruciform DNA. This chain is Crossover junction endodeoxyribonuclease RuvC, found in Photobacterium profundum (strain SS9).